Here is a 265-residue protein sequence, read N- to C-terminus: 3'(2'),5'-bisphosphate nucleotidase CysQ (265 aa).

Mg(2+) is bound by residues Glu80, Asp99, Leu101, Asp102, and Asp222. Glu80 contributes to the substrate binding site. Substrate-binding positions include 101 to 104 and Asp222; that span reads LDGT.

Belongs to the inositol monophosphatase superfamily. CysQ family. Mg(2+) is required as a cofactor.

The protein localises to the cell inner membrane. The enzyme catalyses adenosine 3',5'-bisphosphate + H2O = AMP + phosphate. Converts adenosine-3',5'-bisphosphate (PAP) to AMP. This is 3'(2'),5'-bisphosphate nucleotidase CysQ from Buchnera aphidicola subsp. Acyrthosiphon pisum (strain APS) (Acyrthosiphon pisum symbiotic bacterium).